Here is a 424-residue protein sequence, read N- to C-terminus: Protein SamB (424 aa).

Residues 2 to 189 (FALADVNSFY…QPVEEIWGVG (188 aa)) enclose the UmuC domain.

The protein belongs to the DNA polymerase type-Y family.

Functionally, involved in UV protection and mutation. The protein is Protein SamB (samB) of Salmonella typhimurium.